Consider the following 249-residue polypeptide: Histone H1 (249 aa).

Composition is skewed to low complexity over residues 1–19 and 27–43; these read MSDS…QTAS and KKPA…TTAP. Disordered regions lie at residues 1 to 53 and 105 to 249; these read MSDS…QQMV and QTKG…ATKK. One can recognise an H15 domain in the interval 45 to 119; that stretch reads THPPTQQMVD…GASGSFKLSA (75 aa). Positions 121-134 are enriched in basic and acidic residues; the sequence is SKKEPKPKVSSVEK. A compositionally biased stretch (basic residues) spans 146 to 158; it reads AKKKTISATKKPK. Basic and acidic residues predominate over residues 173–190; that stretch reads KSVDKKKAEKAKAKDAKK. Positions 195-233 are enriched in low complexity; sequence KAKPTTAKAKSSAAKPKTPKPKTTSAKPKKVVAAASPKK. Residues 234 to 249 are compositionally biased toward basic residues; it reads AAAKKPKAKTASATKK.

It belongs to the histone H1/H5 family.

The protein resides in the nucleus. It localises to the chromosome. In terms of biological role, histones H1 are necessary for the condensation of nucleosome chains into higher-order structures. The polypeptide is Histone H1 (His1) (Drosophila hydei (Fruit fly)).